The chain runs to 463 residues: Exodeoxyribonuclease 7 large subunit (463 aa).

It belongs to the XseA family. Heterooligomer composed of large and small subunits.

The protein localises to the cytoplasm. It carries out the reaction Exonucleolytic cleavage in either 5'- to 3'- or 3'- to 5'-direction to yield nucleoside 5'-phosphates.. Bidirectionally degrades single-stranded DNA into large acid-insoluble oligonucleotides, which are then degraded further into small acid-soluble oligonucleotides. The polypeptide is Exodeoxyribonuclease 7 large subunit (Klebsiella pneumoniae (strain 342)).